A 548-amino-acid chain; its full sequence is ATP synthase subunit alpha (548 aa).

172 to 179 (GDRKTGKT) lines the ATP pocket.

It belongs to the ATPase alpha/beta chains family. F-type ATPases have 2 components, CF(1) - the catalytic core - and CF(0) - the membrane proton channel. CF(1) has five subunits: alpha(3), beta(3), gamma(1), delta(1), epsilon(1). CF(0) has three main subunits: a(1), b(2) and c(9-12). The alpha and beta chains form an alternating ring which encloses part of the gamma chain. CF(1) is attached to CF(0) by a central stalk formed by the gamma and epsilon chains, while a peripheral stalk is formed by the delta and b chains.

Its subcellular location is the cell membrane. The enzyme catalyses ATP + H2O + 4 H(+)(in) = ADP + phosphate + 5 H(+)(out). Functionally, produces ATP from ADP in the presence of a proton gradient across the membrane. The alpha chain is a regulatory subunit. In Mycobacteroides abscessus (strain ATCC 19977 / DSM 44196 / CCUG 20993 / CIP 104536 / JCM 13569 / NCTC 13031 / TMC 1543 / L948) (Mycobacterium abscessus), this protein is ATP synthase subunit alpha.